We begin with the raw amino-acid sequence, 427 residues long: UPF0229 protein YeaH (427 aa).

Positions 79–90 are enriched in basic and acidic residues; sequence NDHFVQNDRIER. Residues 79–110 are disordered; sequence NDHFVQNDRIERPQGGGGGSGSGQGQASQDGE. Residues 92 to 102 show a composition bias toward gly residues; sequence QGGGGGSGSGQ.

The protein belongs to the UPF0229 family.

The polypeptide is UPF0229 protein YeaH (Escherichia coli O9:H4 (strain HS)).